A 430-amino-acid chain; its full sequence is Sphingosine-1-phosphate phosphatase 1 (430 aa).

A disordered region spans residues serine 34–threonine 103. Position 101 is a phosphoserine (serine 101). Threonine 103 bears the Phosphothreonine mark. Transmembrane regions (helical) follow at residues phenylalanine 121 to isoleucine 141, leucine 152 to tryptophan 172, methionine 193 to tyrosine 213, and tryptophan 216 to leucine 236. A phosphatase sequence motif I region spans residues lysine 167 to proline 175. The segment at proline 194–histidine 197 is phosphatase sequence motif II. Residue histidine 197 is the Proton donor of the active site. A phosphatase sequence motif III region spans residues serine 237 to aspartate 248. Residue histidine 244 is the Nucleophile of the active site. 5 helical membrane passes run isoleucine 246–leucine 266, tyrosine 279–aspartate 299, isoleucine 311–serine 331, valine 348–valine 368, and tyrosine 409–isoleucine 429.

Belongs to the type 2 lipid phosphate phosphatase family. As to expression, highly expressed in liver and kidney. Expressed in epidermis, in the stratum granulosum and the stratum spinosum.

The protein resides in the endoplasmic reticulum membrane. It localises to the cell membrane. It catalyses the reaction sphinganine 1-phosphate + H2O = sphinganine + phosphate. The catalysed reaction is sphing-4-enine 1-phosphate + H2O = sphing-4-enine + phosphate. With respect to regulation, inhibited by NaF, sodium orthovanadate, propanolol, and N-ethylmaleimide. In terms of biological role, specifically dephosphorylates sphingosine 1-phosphate (S1P), dihydro-S1P, and phyto-S1P. Does not act on ceramide 1-phosphate, lysophosphatidic acid or phosphatidic acid. Sphingosine-1-phosphate phosphatase activity is needed for efficient recycling of sphingosine into the sphingolipid synthesis pathway. Regulates the intracellular levels of the bioactive sphingolipid metabolite S1P that regulates diverse biological processes acting both as an extracellular receptor ligand or as an intracellular second messenger. Involved in efficient ceramide synthesis from exogenous sphingoid bases. Converts S1P to sphingosine, which is readily metabolized to ceramide via ceramide synthase. In concert with sphingosine kinase 2 (SphK2), recycles sphingosine into ceramide through a phosphorylation/dephosphorylation cycle. Regulates endoplasmic-to-Golgi trafficking of ceramides, resulting in the regulation of ceramide levels in the endoplasmic reticulum, preferentially long-chain ceramide species, and influences the anterograde membrane transport of both ceramide and proteins from the endoplasmic reticulum to the Golgi apparatus. The modulation of intracellular ceramide levels in turn regulates apoptosis. Via S1P levels, modulates resting tone, intracellular Ca(2+) and myogenic vasoconstriction in resistance arteries. Also involved in unfolded protein response (UPR) and ER stress-induced autophagy via regulation of intracellular S1P levels. Involved in the regulation of epidermal homeostasis and keratinocyte differentiation. This is Sphingosine-1-phosphate phosphatase 1 from Mus musculus (Mouse).